We begin with the raw amino-acid sequence, 516 residues long: Endoglucanase 17 (516 aa).

Positions 1-29 (MALLLVSSSSSYALRVTIFLSFFFFLCNG) are cleaved as a signal peptide. Residue aspartate 105 is the Nucleophile of the active site. Catalysis depends on residues histidine 433, aspartate 484, and glutamate 493.

The protein belongs to the glycosyl hydrolase 9 (cellulase E) family.

The protein resides in the secreted. The enzyme catalyses Endohydrolysis of (1-&gt;4)-beta-D-glucosidic linkages in cellulose, lichenin and cereal beta-D-glucans.. In Arabidopsis thaliana (Mouse-ear cress), this protein is Endoglucanase 17.